Reading from the N-terminus, the 507-residue chain is Cobyric acid synthase (507 aa).

Residues 249–451 (DIEIAVINLP…IHGIFENREF (203 aa)) form the GATase cobBQ-type domain. C330 acts as the Nucleophile in catalysis. H443 is a catalytic residue.

The protein belongs to the CobB/CobQ family. CobQ subfamily.

It functions in the pathway cofactor biosynthesis; adenosylcobalamin biosynthesis. Catalyzes amidations at positions B, D, E, and G on adenosylcobyrinic A,C-diamide. NH(2) groups are provided by glutamine, and one molecule of ATP is hydrogenolyzed for each amidation. This is Cobyric acid synthase from Thermoanaerobacter sp. (strain X514).